The following is a 317-amino-acid chain: Olfactory receptor 2F1 (317 aa).

Over 1–24 (MGTDNQTWVSEFILLGLSSDWDTR) the chain is Extracellular. Asparagine 5 carries an N-linked (GlcNAc...) asparagine glycan. The helical transmembrane segment at 25 to 48 (VSLFVLFLVMYVVTVLGNCLIVLL) threads the bilayer. Over 49 to 57 (IRLDSRLHT) the chain is Cytoplasmic. Residues 58–79 (PMYFFLTNLSLVDVSYATSVVP) traverse the membrane as a helical segment. The Extracellular segment spans residues 80 to 100 (QLLAHFLAEHKAIPFQSCAAQ). A disulfide bridge links cysteine 97 with cysteine 189. Residues 101–120 (LFFSLALGGIEFVLLAVMAY) traverse the membrane as a helical segment. Topologically, residues 121-139 (DRYVAVCDALRYSAIMHGG) are cytoplasmic. A helical transmembrane segment spans residues 140 to 160 (LCARLAITSWVSGFISSPVQT). The Extracellular segment spans residues 161 to 200 (AITFQLPMCRNKFIDHISCELLAVVRLACVDTSSNEVTIM). The chain crosses the membrane as a helical span at residues 201 to 222 (VSSIVLLMTPFCLVLLSYIQII). Over 223–236 (STILKIQSREGRKK) the chain is Cytoplasmic. Residues 237 to 261 (AFHTCASHLTVVALCYGVAIFTYIQ) form a helical membrane-spanning segment. At 262–272 (PHSSPSVLQEK) the chain is on the extracellular side. A helical transmembrane segment spans residues 273–292 (LFSVFYAILTPMLNPMIYSL). Topologically, residues 293–317 (RNKEVKGAWQKLLWKFSGLTSKLAT) are cytoplasmic.

This sequence belongs to the G-protein coupled receptor 1 family.

The protein localises to the cell membrane. In terms of biological role, odorant receptor. In Homo sapiens (Human), this protein is Olfactory receptor 2F1 (OR2F1).